The chain runs to 202 residues: Recombination protein RecR (202 aa).

The segment at 61–76 adopts a C4-type zinc-finger fold; it reads CARCNSFTEDEVCATC. In terms of domain architecture, Toprim spans 84 to 179; the sequence is GLLCIVETPA…KVTRLARGVP (96 aa).

The protein belongs to the RecR family.

May play a role in DNA repair. It seems to be involved in an RecBC-independent recombinational process of DNA repair. It may act with RecF and RecO. The protein is Recombination protein RecR of Bordetella bronchiseptica (strain ATCC BAA-588 / NCTC 13252 / RB50) (Alcaligenes bronchisepticus).